A 347-amino-acid polypeptide reads, in one-letter code: Putative phosphoesterase 078R (347 aa).

A divalent metal cation is bound by residues D52, N87, and H211.

It belongs to the metallophosphoesterase superfamily. IIV-6 244L family.

The sequence is that of Putative phosphoesterase 078R from Invertebrate iridescent virus 3 (IIV-3).